The following is a 164-amino-acid chain: MSDMELAELWVAVAFFVFVGILLYNGVHKALAKALDARGARIAAELDEARRLKEEAQKLVAEYKRKQREAEAEAEAIVTAAKAEAERLAAETKAKLEEFVSRRTRMAEDKIAQAEHQALADVKAFAADAAVQAAERILAASVPGTATGDRLLGQAIQDVRGKLN.

A helical transmembrane segment spans residues 4–24; the sequence is MELAELWVAVAFFVFVGILLY.

Belongs to the ATPase B chain family. F-type ATPases have 2 components, F(1) - the catalytic core - and F(0) - the membrane proton channel. F(1) has five subunits: alpha(3), beta(3), gamma(1), delta(1), epsilon(1). F(0) has three main subunits: a(1), b(2) and c(10-14). The alpha and beta chains form an alternating ring which encloses part of the gamma chain. F(1) is attached to F(0) by a central stalk formed by the gamma and epsilon chains, while a peripheral stalk is formed by the delta and b chains.

It localises to the cell inner membrane. F(1)F(0) ATP synthase produces ATP from ADP in the presence of a proton or sodium gradient. F-type ATPases consist of two structural domains, F(1) containing the extramembraneous catalytic core and F(0) containing the membrane proton channel, linked together by a central stalk and a peripheral stalk. During catalysis, ATP synthesis in the catalytic domain of F(1) is coupled via a rotary mechanism of the central stalk subunits to proton translocation. In terms of biological role, component of the F(0) channel, it forms part of the peripheral stalk, linking F(1) to F(0). The chain is ATP synthase subunit b 1 from Azorhizobium caulinodans (strain ATCC 43989 / DSM 5975 / JCM 20966 / LMG 6465 / NBRC 14845 / NCIMB 13405 / ORS 571).